A 629-amino-acid chain; its full sequence is Hemocyanin F chain (629 aa).

The Cu cation site is built by His172, His176, His203, His324, His328, and His364. Asn395 and Asn447 each carry an N-linked (GlcNAc...) asparagine glycan. The segment covering 503–513 (SESSVTVSHTP) has biased composition (polar residues). Positions 503–522 (SESSVTVSHTPTFEELQRGE) are disordered. Residue Asn527 is glycosylated (N-linked (GlcNAc...) asparagine). Residues Cys534 and Cys582 are joined by a disulfide bond. Asn615 carries N-linked (GlcNAc...) asparagine glycosylation.

Belongs to the tyrosinase family. Hemocyanin subfamily. Tarantula hemocyanin is a 24-chain polymer with seven different chains identified. As to expression, hemolymph.

The protein resides in the secreted. Its subcellular location is the extracellular space. In terms of biological role, hemocyanins are copper-containing oxygen carriers occurring freely dissolved in the hemolymph of many mollusks and arthropods. The protein is Hemocyanin F chain (HCF) of Aphonopelma sp. (American tarantula).